The primary structure comprises 492 residues: Bifunctional purine biosynthesis protein PurH (492 aa).

The region spanning 1–144 (MKKAILSVSN…KNYKHVTTIV (144 aa)) is the MGS-like domain.

This sequence belongs to the PurH family.

The enzyme catalyses (6R)-10-formyltetrahydrofolate + 5-amino-1-(5-phospho-beta-D-ribosyl)imidazole-4-carboxamide = 5-formamido-1-(5-phospho-D-ribosyl)imidazole-4-carboxamide + (6S)-5,6,7,8-tetrahydrofolate. It carries out the reaction IMP + H2O = 5-formamido-1-(5-phospho-D-ribosyl)imidazole-4-carboxamide. It participates in purine metabolism; IMP biosynthesis via de novo pathway; 5-formamido-1-(5-phospho-D-ribosyl)imidazole-4-carboxamide from 5-amino-1-(5-phospho-D-ribosyl)imidazole-4-carboxamide (10-formyl THF route): step 1/1. Its pathway is purine metabolism; IMP biosynthesis via de novo pathway; IMP from 5-formamido-1-(5-phospho-D-ribosyl)imidazole-4-carboxamide: step 1/1. The chain is Bifunctional purine biosynthesis protein PurH from Staphylococcus aureus (strain bovine RF122 / ET3-1).